The sequence spans 148 residues: IQ domain-containing protein F5 (148 aa).

IQ domains follow at residues 11–40 and 67–96; these read ETSA…SAWI and KTWA…AVRI.

The polypeptide is IQ domain-containing protein F5 (Iqcf5) (Mus musculus (Mouse)).